Here is a 557-residue protein sequence, read N- to C-terminus: MKEKIRKKILLAPEEPGVYIFKNKGVPIYIGKAKRLSNRLRSYLNPQTEKVFRIGEEADELETIVVMNEREAFILEANLIKKYRPKYNVRLKDTDFYPYIRISDDEIPYVEIVKRKLWDGTYFGPYTSVQFVRNLLEILQKIMGFRTCKSDLKRIKRPCFLYHLGRCIGPCIGNIESHEEAIRKLREFLSGNMEEVFDYLKEKMETHSKMLDFENAAKYRDLLLNLSNVLESQGVVFEENINCDVLVHAHDLFVVLRVRNGYLVGKISFEMEGGNVEDFIREYYISGRGDIPKTLILESDLDEMDYSSLGFEYVGPPRSTTEEDLLEKAKKNLENELKMRGLRKEALEELMKLLNMKDFPYRIEGIDISHLQGKYTVASLVVFEDGFPKKGDYRRYKIEQDHPDDYESIRTVVKRRYSKHPLPNLLFVDGGIGQVNAAIEALKEIGKDCPVVGLAKKEETVVFENREIHLPHDHPVLRLLVQIRDETHRFAVSYHRKRREKESLRSVLDNVPGIGPIRKKKLIEHFGSLENIRSASLEEIARVIGSTEIARRVLDIL.

The GIY-YIG domain occupies 14-89; the sequence is EEPGVYIFKN…IKKYRPKYNV (76 aa). The region spanning 194 to 229 is the UVR domain; that stretch reads EEVFDYLKEKMETHSKMLDFENAAKYRDLLLNLSNV.

The protein belongs to the UvrC family. Interacts with UvrB in an incision complex.

It is found in the cytoplasm. The UvrABC repair system catalyzes the recognition and processing of DNA lesions. UvrC both incises the 5' and 3' sides of the lesion. The N-terminal half is responsible for the 3' incision and the C-terminal half is responsible for the 5' incision. This is UvrABC system protein C from Thermotoga maritima (strain ATCC 43589 / DSM 3109 / JCM 10099 / NBRC 100826 / MSB8).